The primary structure comprises 213 residues: MLGGGAPRARHVLPNIVERTSRGEYSMDPYSKLLKERIVFLGVQIDDVSANDVMAQLLFLESEDPDRDISIYINSPGGSFTSLTAIYDTMQFVRPDISTICMGQAASAAAVLLAAGTPGKRFALENSRILIHQPSAQGEGQSSDIEIQAREILRVRALQETMLARHTGRTETEIRRDTERDKIFSADEAEEYGLIDEVIMSRKAARLLSARSA.

S107 functions as the Nucleophile in the catalytic mechanism. The active site involves H132.

It belongs to the peptidase S14 family. Fourteen ClpP subunits assemble into 2 heptameric rings which stack back to back to give a disk-like structure with a central cavity, resembling the structure of eukaryotic proteasomes.

Its subcellular location is the cytoplasm. It catalyses the reaction Hydrolysis of proteins to small peptides in the presence of ATP and magnesium. alpha-casein is the usual test substrate. In the absence of ATP, only oligopeptides shorter than five residues are hydrolyzed (such as succinyl-Leu-Tyr-|-NHMec, and Leu-Tyr-Leu-|-Tyr-Trp, in which cleavage of the -Tyr-|-Leu- and -Tyr-|-Trp bonds also occurs).. In terms of biological role, cleaves peptides in various proteins in a process that requires ATP hydrolysis. Has a chymotrypsin-like activity. Plays a major role in the degradation of misfolded proteins. The protein is ATP-dependent Clp protease proteolytic subunit 3 of Frankia casuarinae (strain DSM 45818 / CECT 9043 / HFP020203 / CcI3).